The following is a 446-amino-acid chain: Glucosylglycerate hydrolase (446 aa).

Substrate is bound by residues Tyr-36, 40-43, Tyr-88, Gln-115, and Gly-180; that span reads WSWD. Catalysis depends on Asp-182, which acts as the Proton donor. Substrate is bound by residues Arg-216 and 375 to 376; that span reads YW. Residue Glu-419 is the Proton acceptor of the active site. Residue Gln-434 coordinates substrate.

It belongs to the glycosyl hydrolase 63 family. As to quaternary structure, homotetramer. Dimer of dimers.

It catalyses the reaction (2R)-2-O-(alpha-D-glucopyranosyl)-glycerate + H2O = (R)-glycerate + D-glucose. Activity is not dependent on divalent cations, but it is enhanced by Mg(2+). Functionally, catalyzes the hydrolysis of glucosylglycerate (GG) to glycerate and glucose. Involved in recovery from nitrogen starvation by promoting the rapid mobilization of the glucosylglycerate that accumulates under these conditions. Can also hydrolyze mannosylglycerate (MG), with tenfold lower efficiency. The polypeptide is Glucosylglycerate hydrolase (Mycolicibacterium hassiacum (strain DSM 44199 / CIP 105218 / JCM 12690 / 3849) (Mycobacterium hassiacum)).